Consider the following 585-residue polypeptide: Formate--tetrahydrofolate ligase (585 aa).

Threonine 65–threonine 72 is an ATP binding site.

The protein belongs to the formate--tetrahydrofolate ligase family.

It catalyses the reaction (6S)-5,6,7,8-tetrahydrofolate + formate + ATP = (6R)-10-formyltetrahydrofolate + ADP + phosphate. It functions in the pathway one-carbon metabolism; tetrahydrofolate interconversion. This chain is Formate--tetrahydrofolate ligase, found in Shewanella baltica (strain OS155 / ATCC BAA-1091).